Consider the following 329-residue polypeptide: Tyrosine--tRNA ligase (329 aa).

Y31, Y157, Q161, D164, and Q179 together coordinate L-tyrosine. Residues 220–224 carry the 'KMSKS' region motif; that stretch reads KMSKS. Residue K223 coordinates ATP.

This sequence belongs to the class-I aminoacyl-tRNA synthetase family. TyrS type 4 subfamily. Homodimer.

Its subcellular location is the cytoplasm. It catalyses the reaction tRNA(Tyr) + L-tyrosine + ATP = L-tyrosyl-tRNA(Tyr) + AMP + diphosphate + H(+). In terms of biological role, catalyzes the attachment of tyrosine to tRNA(Tyr) in a two-step reaction: tyrosine is first activated by ATP to form Tyr-AMP and then transferred to the acceptor end of tRNA(Tyr). This Picrophilus torridus (strain ATCC 700027 / DSM 9790 / JCM 10055 / NBRC 100828 / KAW 2/3) protein is Tyrosine--tRNA ligase.